The sequence spans 93 residues: Small ribosomal subunit protein uS19 (93 aa).

It belongs to the universal ribosomal protein uS19 family.

In terms of biological role, protein S19 forms a complex with S13 that binds strongly to the 16S ribosomal RNA. This is Small ribosomal subunit protein uS19 from Synechococcus sp. (strain JA-3-3Ab) (Cyanobacteria bacterium Yellowstone A-Prime).